The chain runs to 306 residues: Pantothenate kinase (306 aa).

90–97 (GSVAVGKS) is an ATP binding site.

Belongs to the prokaryotic pantothenate kinase family.

Its subcellular location is the cytoplasm. The enzyme catalyses (R)-pantothenate + ATP = (R)-4'-phosphopantothenate + ADP + H(+). It functions in the pathway cofactor biosynthesis; coenzyme A biosynthesis; CoA from (R)-pantothenate: step 1/5. This Listeria innocua serovar 6a (strain ATCC BAA-680 / CLIP 11262) protein is Pantothenate kinase (coaA).